The chain runs to 920 residues: Translation initiation factor IF-2 (920 aa).

Composition is skewed to basic and acidic residues over residues 149-175 (EAEMKAAEEARQKEVAAPVVEKEEKPV), 186-197 (AEKKATADKAAK), and 255-265 (AKPEGADDKKK). 2 disordered regions span residues 149–197 (EAEM…KAAK) and 245–319 (EAKK…KQRQ). The segment covering 301–311 (SSGGVGGWRSG) has biased composition (gly residues). A tr-type G domain is found at 418–585 (PRPPVVTVMG…NVLLQAEILE (168 aa)). A G1 region spans residues 427–434 (GHVDHGKT). 427–434 (GHVDHGKT) lines the GTP pocket. The tract at residues 452–456 (GITQH) is G2. Residues 473–476 (DTPG) form a G3 region. Residues 473–477 (DTPGH) and 527–530 (NKID) contribute to the GTP site. A G4 region spans residues 527–530 (NKID). A G5 region spans residues 563 to 565 (SAK).

Belongs to the TRAFAC class translation factor GTPase superfamily. Classic translation factor GTPase family. IF-2 subfamily.

The protein localises to the cytoplasm. In terms of biological role, one of the essential components for the initiation of protein synthesis. Protects formylmethionyl-tRNA from spontaneous hydrolysis and promotes its binding to the 30S ribosomal subunits. Also involved in the hydrolysis of GTP during the formation of the 70S ribosomal complex. The sequence is that of Translation initiation factor IF-2 from Polynucleobacter asymbioticus (strain DSM 18221 / CIP 109841 / QLW-P1DMWA-1) (Polynucleobacter necessarius subsp. asymbioticus).